A 303-amino-acid chain; its full sequence is Inosose dehydratase (303 aa).

It belongs to the IolE/MocC family. Glutathione is required as a cofactor. It depends on Co(2+) as a cofactor. Requires Mn(2+) as cofactor.

It carries out the reaction scyllo-inosose = 3D-3,5/4-trihydroxycyclohexane-1,2-dione + H2O. The protein operates within polyol metabolism; myo-inositol degradation into acetyl-CoA; acetyl-CoA from myo-inositol: step 2/7. Its function is as follows. Catalyzes the dehydration of inosose (2-keto-myo-inositol, 2KMI or 2,4,6/3,5-pentahydroxycyclohexanone) to 3D-(3,5/4)-trihydroxycyclohexane-1,2-dione (D-2,3-diketo-4-deoxy-epi-inositol). The chain is Inosose dehydratase from Halalkalibacterium halodurans (strain ATCC BAA-125 / DSM 18197 / FERM 7344 / JCM 9153 / C-125) (Bacillus halodurans).